A 275-amino-acid polypeptide reads, in one-letter code: Shikimate dehydrogenase (NADP(+)) (275 aa).

Shikimate is bound by residues 19–21 (SKS) and Thr-66. Residue Lys-70 is the Proton acceptor of the active site. Glu-82 provides a ligand contact to NADP(+). 2 residues coordinate shikimate: Asn-91 and Asp-106. NADP(+)-binding positions include 130–134 (GAGGA), 154–159 (NRTASK), and Met-217. Shikimate is bound at residue Tyr-219. Gly-241 contributes to the NADP(+) binding site.

Belongs to the shikimate dehydrogenase family. Homodimer.

The catalysed reaction is shikimate + NADP(+) = 3-dehydroshikimate + NADPH + H(+). The protein operates within metabolic intermediate biosynthesis; chorismate biosynthesis; chorismate from D-erythrose 4-phosphate and phosphoenolpyruvate: step 4/7. Involved in the biosynthesis of the chorismate, which leads to the biosynthesis of aromatic amino acids. Catalyzes the reversible NADPH linked reduction of 3-dehydroshikimate (DHSA) to yield shikimate (SA). In Colwellia psychrerythraea (strain 34H / ATCC BAA-681) (Vibrio psychroerythus), this protein is Shikimate dehydrogenase (NADP(+)).